The chain runs to 198 residues: Recombination protein RecR (198 aa).

The segment at 57–72 (CSVCGHITDKDPCYIC) adopts a C4-type zinc-finger fold. Residues 80-175 (SVICVVQESK…KVTRIAHGLP (96 aa)) enclose the Toprim domain.

Belongs to the RecR family.

May play a role in DNA repair. It seems to be involved in an RecBC-independent recombinational process of DNA repair. It may act with RecF and RecO. In Listeria monocytogenes serotype 4b (strain CLIP80459), this protein is Recombination protein RecR.